Reading from the N-terminus, the 274-residue chain is GCN5-related N-acetyltransferase 7, chloroplastic (274 aa).

A chloroplast-targeting transit peptide spans 1–65 (MAFLCSSLPS…STFVISESVS (65 aa)). The N-acetyltransferase domain maps to 75–267 (LRVRTFNELN…QRLLLWLALP (193 aa)). Acetyl-CoA is bound by residues 189–191 (VCV), 197–202 (RNGVGY), 228–230 (NEA), and tyrosine 235. Residue tyrosine 235 is the Proton donor of the active site.

This sequence belongs to the acetyltransferase family. GNAT subfamily. As to quaternary structure, oligomer. In terms of processing, autoacetylated. As to expression, expressed in green tissues.

The protein resides in the plastid. It localises to the chloroplast. The enzyme catalyses an N-terminal L-alpha-aminoacyl-[protein] + acetyl-CoA = N-terminal N(alpha)-acetyl-L-alpha-aminoacyl-[protein] + CoA + H(+). The catalysed reaction is L-lysyl-[protein] + acetyl-CoA = N(6)-acetyl-L-lysyl-[protein] + CoA + H(+). It catalyses the reaction N-terminal L-alanyl-[protein] + acetyl-CoA = N-terminal N(alpha)-acetyl-L-alanyl-[protein] + CoA + H(+). It carries out the reaction N-terminal L-seryl-[protein] + acetyl-CoA = N-terminal N(alpha)-acetyl-L-seryl-[protein] + CoA + H(+). The enzyme catalyses N-terminal L-threonyl-[protein] + acetyl-CoA = N-terminal N(alpha)-acetyl-L-threonyl-[protein] + CoA + H(+). The catalysed reaction is N-terminal L-methionyl-[protein] + acetyl-CoA = N-terminal N(alpha)-acetyl-L-methionyl-[protein] + CoA + H(+). It catalyses the reaction N-terminal L-prolyl-[protein] + acetyl-CoA = N-terminal N(alpha)-acetyl-L-prolyl-[protein] + CoA + H(+). It carries out the reaction N-terminal L-valyl-[protein] + acetyl-CoA = N-terminal N(alpha)-acetyl-L-valyl-[protein] + CoA + H(+). Functionally, protein acetyltransferase with dual specificity triggering both N-alpha-acetylation (NTA), with a large spectrum of modified N-termini, including methionine, alanine, serine, threonine and to a lower extent valine and proline as substrates, and epsilon-lysine acetylation (KA). The protein is GCN5-related N-acetyltransferase 7, chloroplastic of Arabidopsis thaliana (Mouse-ear cress).